The primary structure comprises 270 residues: Acyl-[acyl-carrier-protein]--UDP-N-acetylglucosamine O-acyltransferase (270 aa).

Belongs to the transferase hexapeptide repeat family. LpxA subfamily. As to quaternary structure, homotrimer.

The protein localises to the cytoplasm. It catalyses the reaction a (3R)-hydroxyacyl-[ACP] + UDP-N-acetyl-alpha-D-glucosamine = a UDP-3-O-[(3R)-3-hydroxyacyl]-N-acetyl-alpha-D-glucosamine + holo-[ACP]. Its pathway is glycolipid biosynthesis; lipid IV(A) biosynthesis; lipid IV(A) from (3R)-3-hydroxytetradecanoyl-[acyl-carrier-protein] and UDP-N-acetyl-alpha-D-glucosamine: step 1/6. Functionally, involved in the biosynthesis of lipid A, a phosphorylated glycolipid that anchors the lipopolysaccharide to the outer membrane of the cell. This chain is Acyl-[acyl-carrier-protein]--UDP-N-acetylglucosamine O-acyltransferase, found in Helicobacter pylori (strain P12).